A 77-amino-acid polypeptide reads, in one-letter code: Acyl carrier protein (77 aa).

Positions 2–77 (SSIDKRIKEI…DAIDYITDHT (76 aa)) constitute a Carrier domain. Ser-37 bears the O-(pantetheine 4'-phosphoryl)serine mark.

Belongs to the acyl carrier protein (ACP) family. In terms of processing, 4'-phosphopantetheine is transferred from CoA to a specific serine of apo-ACP by AcpS. This modification is essential for activity because fatty acids are bound in thioester linkage to the sulfhydryl of the prosthetic group.

Its subcellular location is the cytoplasm. Its pathway is lipid metabolism; fatty acid biosynthesis. Functionally, carrier of the growing fatty acid chain in fatty acid biosynthesis. This Geotalea uraniireducens (strain Rf4) (Geobacter uraniireducens) protein is Acyl carrier protein.